We begin with the raw amino-acid sequence, 359 residues long: 4-galactosyl-N-acetylglucosaminide 3-alpha-L-fucosyltransferase FUT6 (359 aa).

The Cytoplasmic portion of the chain corresponds to 1–14 (MDPLGPAKPQWSWR). A helical; Signal-anchor for type II membrane protein transmembrane segment spans residues 15-34 (CCLTTLLFQLLVAVCFFSYL). The Lumenal segment spans residues 35–359 (RVSRDDPTVY…QTRSIAAWFT (325 aa)). Asparagine 46, asparagine 91, asparagine 153, and asparagine 184 each carry an N-linked (GlcNAc...) asparagine glycan. The interval 73–112 (KPIALPRCSEMVPGTADCNITADRKVYPQADAVIVHHREV) is determines site-specific fucosylation.

It belongs to the glycosyltransferase 10 family. As to quaternary structure, homodimer and monomer. Monomer (secreted form). N-glycosylated. In terms of processing, proteolytic cleavage releases a secreted glycoform of 43 kDa.

It localises to the golgi apparatus. The protein resides in the golgi stack membrane. Its subcellular location is the secreted. The enzyme catalyses a beta-D-galactosyl-(1-&gt;4)-N-acetyl-beta-D-glucosaminyl derivative + GDP-beta-L-fucose = a beta-D-galactosyl-(1-&gt;4)-[alpha-L-fucosyl-(1-&gt;3)]-N-acetyl-beta-D-glucosaminyl derivative + GDP + H(+). It catalyses the reaction an N-acetyl-alpha-neuraminyl-(2-&gt;3)-beta-D-galactosyl-(1-&gt;4)-N-acetyl-beta-D-glucosaminyl derivative + GDP-beta-L-fucose = an alpha-Neu5Ac-(2-&gt;3)-beta-D-Gal-(1-&gt;4)-[alpha-L-Fuc-(1-&gt;3)]-beta-D-GlcNAc derivative + GDP + H(+). The catalysed reaction is an alpha-Neu5Ac-(2-&gt;3)-beta-D-Gal-(1-&gt;4)-beta-D-GlcNAc-(1-&gt;3)-beta-D-Gal-(1-&gt;4)-[alpha-L-Fuc-(1-&gt;3)]-beta-D-GlcNAc derivative + GDP-beta-L-fucose = an alpha-Neu5Ac-(2-&gt;3)-beta-D-Gal-(1-&gt;4)-[alpha-L-Fuc-(1-&gt;3)]-beta-D-GlcNAc-(1-&gt;3)-beta-D-Gal-(1-&gt;4)-[alpha-L-Fuc-(1-&gt;3)]-beta-D-GlcNAc derivative + GDP + H(+). It carries out the reaction a neolactoside nLc6Cer + GDP-beta-L-fucose = beta-D-Gal-(1-&gt;4)-[alpha-L-Fuc-(1-&gt;3)]-beta-D-GlcNAc-(1-&gt;3)-beta-D-Gal-(1-&gt;4)-beta-D-GlcNAc-(1-&gt;3)-beta-D-Gal-(1-&gt;4)-beta-D-Glc-(1&lt;-&gt;1')-Cer + GDP + H(+). The enzyme catalyses a neolactoside nLc6Cer + GDP-beta-L-fucose = beta-D-galactosyl-(1-&gt;4)-N-acetyl-beta-D-glucosaminyl-(1-&gt;3)-beta-D-galactosyl-(1-&gt;4)-[alpha-L-fucosyl-(1-&gt;3)]-N-acetyl-beta-D-glucosaminyl-(1-&gt;3)-beta-D-galactosyl-(1-&gt;4)-beta-D-glucosyl-(1&lt;-&gt;1')-ceramide + GDP + H(+). It catalyses the reaction a neolactoside VI(3)-alpha-NeuNAc-nLc6Cer + GDP-beta-L-fucose = a neolactoside VI(3)-alpha-NeuAc,V(3)-alphaFuc-nLc6Cer + GDP + H(+). The catalysed reaction is beta-D-galactosyl-(1-&gt;4)-N-acetyl-D-glucosamine + GDP-beta-L-fucose = beta-D-galactosyl-(1-&gt;4)-[alpha-L-fucosyl-(1-&gt;3)]-N-acetyl-D-glucosamine + GDP + H(+). It carries out the reaction N-acetyl-alpha-neuraminosyl-(2-&gt;3)-beta-D-galactosyl-(1-&gt;4)-N-acetyl-beta-D-glucosamine + GDP-beta-L-fucose = N-acetyl-alpha-neuraminosyl-(2-&gt;3)-beta-D-galactosyl-(1-&gt;4)-[alpha-L-fucosyl-(1-&gt;3)]-N-acetyl-beta-D-glucosamine + GDP + H(+). The enzyme catalyses lactose + GDP-beta-L-fucose = beta-D-galactosyl-(1-&gt;4)-[alpha-L-fucosyl-(1-&gt;3)]-D-glucose + GDP + H(+). It catalyses the reaction alpha-L-Fuc-(1-&gt;2)-beta-D-Gal-(1-&gt;4)-D-Glc + GDP-beta-L-fucose = alpha-L-Fuc-(1-&gt;2)-beta-D-Gal-(1-&gt;4)-[alpha-L-Fuc-(1-&gt;3)]-D-Glc + GDP + H(+). The catalysed reaction is a beta-D-galactosyl-(1-&gt;4)-N-acetyl-beta-D-6-sulfooxy-glucosaminyl derivative + GDP-beta-L-fucose = a beta-D-galactosyl-(1-&gt;4)-[alpha-L-fucosyl-(1-&gt;3)]-N-acetyl-beta-D-6-sulfooxy-glucosaminyl derivative + GDP + H(+). Its pathway is protein modification; protein glycosylation. Catalyzes the transfer of L-fucose, from a guanosine diphosphate-beta-L-fucose, to the N-acetyl glucosamine (GlcNAc) of a distal alpha2,3 sialylated lactosamine unit of a glycoprotein- or glycolipid-linked sialopolylactosamines chain or of a distal or internal lactosamine unit of a neutral glycoprotein- or glycolipid-linked polylactosamines chain through an alpha-1,3 glycosidic linkage and participates in surface expression of the sialyl Lewis X (sLe(x)), Lewis X (Le(x)) and non sialylated VIM2 determinants. Moreover transfers fucose to H-type 2 (Fucalpha1-2Galbeta1-4GlcNAc) chain acceptor substrates and participates in difucosylated sialyl Lewis x determinants. Also fucosylates a polylactosamine substrate having a 6 sulfate modification at the GlcNAc moiety and gives rise to sialyl and non-sialyl 6-sulfo lewis X. Does not have activity towards type 1 ((Galbeta1-3GlcNAc)) and H-type 1 chain (Fucalpha1-2Galbeta1-3GlcNAc) acceptors substrates. This Pan troglodytes (Chimpanzee) protein is 4-galactosyl-N-acetylglucosaminide 3-alpha-L-fucosyltransferase FUT6.